We begin with the raw amino-acid sequence, 188 residues long: Translation machinery-associated protein 22 (188 aa).

An SUI1 domain is found at 96–167; sequence VVIKRIERSK…GVEELITQML (72 aa).

It belongs to the DENR family. As to quaternary structure, interacts with the 40S ribosomal subunit.

The protein resides in the cytoplasm. The sequence is that of Translation machinery-associated protein 22 (TMA22) from Yarrowia lipolytica (strain CLIB 122 / E 150) (Yeast).